A 1845-amino-acid chain; its full sequence is MSTNSTPRKQKLSNSKSLQNSPISPTVKKTNSFPLGNNIPTNINRSKKDKNNNSNNNINNNNSNGIGSNTIINSTPIATTPVPPLPFIHSSSSSSSSPSPSSSSSSPFPKAKKSPSLSINQQQQQQPQQPQQSPQSQQSPQSQQSQQSQQQQPQQPQEQQEPLPNLSFLRNQEPDKNVLPTSRKRPPSVMPSTPNQSSNSSSLNSSLNFSSSNSSPSPTSTQSNNSRFETRSQNDQYENNNNNNNNNNNNNNNNNNNNNNNNNIECIVIDDDDDDDDDEGNSIKSTHTSTQSTPIRDRRQRDNKWTINPLPQFQREIIDVDTPSPPNESLSIVSQTTTNTITDTTSIQTPTLIRQSSSLLSSSSSLSPSTTSTPLTQNNINLQNAQVIATMTAPMEIELPTIVQLEPLFSSEFTTSTQNLFIQTPPFTSTLTLPTTTAQTSQTLFTIQTSHDINNNNNNNNNNKNKNKNKKEIEKEKEKLREALKQKLKEYENENEKEREKERKREREIEIERERKERERKEREKERKKEKEREREREERERKEIERKEREREEREERERKEIERKETERKEIERKEIERKEIERKERERKERKEREEREEREREERERKEREEREKEIEMEREKKKEKEKEKEKEKEKEKEKEKEKEKEKEKEKEKEKKRKENEVENEIEKERREKNDSYMVLNYHHSIDDHHSESESESDSDQDSIYSISTQELSSVISDNDFCDSDNEKVANNNRTVGETFLNDSRNNNNNNNNNKNNNNKKIENDKNQLIERERLISAFNDKAFLYALDTIREVLGGIDFKLKVSKEQIIEISTNAKKPLNILSEPEQQQQQQQQQQQQQHQQQQQQQQQQQQQQQQQTTKTTTTTNNTTTTTAETEKPKEVFLLKKPIKIPYGRDCKKRLIRRFHGTSRNPLFHKNLESTLKLLKRAKFDWASIEFDTKSYLMNCNCKTVCHKSERMKDNPTNKLQNNNRNNNNNNNNIINNNNNNNNKNNNNKNNNNKNNNRNNNSIAKKIGTNNNNNNTTIIKNNNNNNNNNNNNNNNNNNIIKNNNNNNKNNNNNNNTIVKKIETIKKDINKKPTKTTTTTSSSSSSTSSSNSLTVIKKPVKKINGSQRICLFEDDFDVGIGVPVTTGTSETTTTRASSIRRKMNISNIFDDFTKKPRQNKYNEIEMPDLFASKECNYTLEQQAPFIRAQKLLLTQQHENNLYNGKRFMKYDEWLDLYHGEMRSSIQNPKVLKHYISFSQEVYGEAEPTLLRHWIHLGLIKPTDVFCDIGCGIGNVLFQLAAQVGCRVIGVEIRKDLYDISQSMLEIYKKRSLELGLHPSTQQIKIYNCDVKGSLEFDFSEPNVFFMHNTCFGPELEISIMELFKKYSKPGTKVITMKTLCPRFKPSDKKTKPWGIFKYPYESYEMEEGSLSWRSATNCSFYSFTIDDKDSDIVTDQTHLNRVILSTPKKKHSKLQLFSSSSLPSSPPSSSSSSSPPNIATNTTTTTTTTTTTSPSSISLPSPYLSPSKKTPNSNKRDRSDIDNSNSDDGDENNNNININNNNNNSNNKPIKLKLSMDHSIDNQSNSESSDTDVEYMPWSKRNNRKKRKSLSYSLDSYLSSRISPSLSLSTSSSSSSSLDSSPYSSPPSSSSSDNENDDDNGDDEDDSSSSNDTKLKEKLLLMKNNEKIGGAPPLTRRNANSDTNKLVQGCYQSLSSYALPKEESQIHKLQLQAKLLEHKNSLVLKHQKSIHDQQKRLSRKQKKLAKKNKKKEQQLQAQAKTINYNNNNNNNNQNDNQVNHNNLNENEINTDLINGYNNNNNNNIINNDNDNDNDNDKDDDKDSNNKDYNNINDNNK.

A compositionally biased stretch (polar residues) spans 1–44 (MSTNSTPRKQKLSNSKSLQNSPISPTVKKTNSFPLGNNIPTNIN). 8 disordered regions span residues 1–67 (MSTN…NGIG), 83–306 (PPLP…NKWT), 450–470 (SHDINNNNNNNNNNKNKNKNK), 486–571 (QKLK…TERK), 585–681 (RKER…NDSY), 741–767 (GETFLNDSRNNNNNNNNNKNNNNKKIE), 862–881 (QTTKTTTTTNNTTTTTAETE), and 963–1102 (KDNP…SNSL). Low complexity-rich tracts occupy residues 52–67 (NNSNNNINNNNSNGIG), 90–162 (SSSS…QQEP), 191–226 (PSTPNQSSNSSSLNSSLNFSSSNSSPSPTSTQSNNS), and 239–263 (NNNNNNNNNNNNNNNNNNNNNNNNN). The span at 268 to 280 (VIDDDDDDDDDEG) shows a compositional bias: acidic residues. Over residues 282–294 (SIKSTHTSTQSTP) the composition is skewed to polar residues. Residues 295–304 (IRDRRQRDNK) are compositionally biased toward basic and acidic residues. Residues 453–464 (INNNNNNNNNNK) show a composition bias toward low complexity. Basic and acidic residues predominate over residues 585–679 (RKERERKERK…IEKERREKND (95 aa)). A required for interaction with nucleosomes and DNA region spans residues 625 to 639 (KKKEKEKEKEKEKEK). 4 stretches are compositionally biased toward low complexity: residues 750-763 (NNNNNNNNNKNNNN), 862-877 (QTTKTTTTTNNTTTTT), 972-1011 (NNNRNNNNNNNNIINNNNNNNNKNNNNKNNNNKNNNRNNN), and 1020-1067 (NNNN…NNTI). A compositionally biased stretch (basic and acidic residues) spans 1069–1080 (KKIETIKKDINK). Residues 1084-1102 (KTTTTTSSSSSSTSSSNSL) are compositionally biased toward low complexity. Residues 1125-1446 (FDVGIGVPVT…KDSDIVTDQT (322 aa)) form the DOT1 domain. Residues 1251 to 1254 (YGEA), 1274 to 1283 (FCDIGCGIGN), and glutamate 1300 each bind S-adenosyl-L-methionine. 5 disordered regions span residues 1463-1559 (LQLF…NKPI), 1610-1661 (RISP…SSND), 1735-1762 (HQKSIHDQQKRLSRKQKKLAKKNKKKEQ), 1772-1791 (NYNNNNNNNNQNDNQVNHNN), and 1799-1845 (TDLI…DNNK). 3 stretches are compositionally biased toward low complexity: residues 1467–1522 (SSSS…TPNS), 1541–1556 (NNNNININNNNNNSNN), and 1610–1642 (RISPSLSLSTSSSSSSSLDSSPYSSPPSSSSSD). A compositionally biased stretch (acidic residues) spans 1643 to 1656 (NENDDDNGDDEDDS). Basic residues predominate over residues 1745–1759 (RLSRKQKKLAKKNKK). Composition is skewed to low complexity over residues 1799 to 1817 (TDLINGYNNNNNNNIINND) and 1835 to 1845 (KDYNNINDNNK).

It belongs to the class I-like SAM-binding methyltransferase superfamily. DOT1 family.

The protein localises to the nucleus. The enzyme catalyses L-lysyl(79)-[histone H3] + 3 S-adenosyl-L-methionine = N(6),N(6),N(6)-trimethyl-L-lysyl(79)-[histone H3] + 3 S-adenosyl-L-homocysteine + 3 H(+). Histone methyltransferase that specifically methylates histone H3 to form H3K79me. This methylation is required for telomere silencing, correct growth and development, and for resistance to DNA damage induced by UV LIGHT. The polypeptide is Histone-lysine N-methyltransferase, H3 lysine-79 specific (Dictyostelium discoideum (Social amoeba)).